The sequence spans 874 residues: Leucine--tRNA ligase (874 aa).

The 'HIGH' region signature appears at 43–53 (PYPSGRIHIGH). The 'KMSKS' region motif lies at 630 to 634 (KMSKS). Lys-633 contacts ATP.

This sequence belongs to the class-I aminoacyl-tRNA synthetase family.

Its subcellular location is the cytoplasm. The catalysed reaction is tRNA(Leu) + L-leucine + ATP = L-leucyl-tRNA(Leu) + AMP + diphosphate. This is Leucine--tRNA ligase from Bradyrhizobium sp. (strain ORS 278).